The following is a 274-amino-acid chain: 2-succinyl-6-hydroxy-2,4-cyclohexadiene-1-carboxylate synthase (274 aa).

It belongs to the AB hydrolase superfamily. MenH family. Monomer.

It carries out the reaction 5-enolpyruvoyl-6-hydroxy-2-succinyl-cyclohex-3-ene-1-carboxylate = (1R,6R)-6-hydroxy-2-succinyl-cyclohexa-2,4-diene-1-carboxylate + pyruvate. The protein operates within quinol/quinone metabolism; 1,4-dihydroxy-2-naphthoate biosynthesis; 1,4-dihydroxy-2-naphthoate from chorismate: step 3/7. Its pathway is quinol/quinone metabolism; menaquinone biosynthesis. Its function is as follows. Catalyzes a proton abstraction reaction that results in 2,5-elimination of pyruvate from 2-succinyl-5-enolpyruvyl-6-hydroxy-3-cyclohexene-1-carboxylate (SEPHCHC) and the formation of 2-succinyl-6-hydroxy-2,4-cyclohexadiene-1-carboxylate (SHCHC). The sequence is that of 2-succinyl-6-hydroxy-2,4-cyclohexadiene-1-carboxylate synthase from Yersinia enterocolitica serotype O:8 / biotype 1B (strain NCTC 13174 / 8081).